A 442-amino-acid polypeptide reads, in one-letter code: Histidinol dehydrogenase (442 aa).

Residues Y138, Q199, and N222 each contribute to the NAD(+) site. Substrate-binding residues include S245, Q267, and H270. Residues Q267 and H270 each coordinate Zn(2+). Active-site proton acceptor residues include E335 and H336. The substrate site is built by H336, D369, E423, and H428. A Zn(2+)-binding site is contributed by D369. H428 is a Zn(2+) binding site.

It belongs to the histidinol dehydrogenase family. It depends on Zn(2+) as a cofactor.

It carries out the reaction L-histidinol + 2 NAD(+) + H2O = L-histidine + 2 NADH + 3 H(+). It participates in amino-acid biosynthesis; L-histidine biosynthesis; L-histidine from 5-phospho-alpha-D-ribose 1-diphosphate: step 9/9. Its function is as follows. Catalyzes the sequential NAD-dependent oxidations of L-histidinol to L-histidinaldehyde and then to L-histidine. This chain is Histidinol dehydrogenase, found in Ralstonia nicotianae (strain ATCC BAA-1114 / GMI1000) (Ralstonia solanacearum).